Consider the following 288-residue polypeptide: MFVLPPPQEPLLGAHTSAAGGLHNALYEGRDIGATTIQLFTANQRQWKRRSLTQNMIEQFQTALDETSLSYIMSHAGYLNNPGAPNPEILEKTRICMYQEIADCIALGISFVNFHPGAALSDSKESCLDRAITSFSQMAPLFETNPPLVVLLETTAGQGSLIGSSFEELAYLIQGIKAHIPVGVCLDTCHIFAAGYDISSPEGWEQVLKHFDEVIGLSFLRAIHLNDSIFPLGKNKDRHAPIGEGCIGSESFCFLMRDERTRKLPKYLETPGGPDLWTKEIRYLQKVS.

The Zn(2+) site is built by His75, His115, Glu153, Asp187, His190, His224, Asp237, His239, and Glu269.

Belongs to the AP endonuclease 2 family. Zn(2+) serves as cofactor.

It carries out the reaction Endonucleolytic cleavage to 5'-phosphooligonucleotide end-products.. Functionally, endonuclease IV plays a role in DNA repair. It cleaves phosphodiester bonds at apurinic or apyrimidinic (AP) sites, generating a 3'-hydroxyl group and a 5'-terminal sugar phosphate. The protein is Probable endonuclease 4 of Chlamydia muridarum (strain MoPn / Nigg).